The sequence spans 357 residues: Gas vesicle ATPase GvpN (357 aa).

Polar residues predominate over residues 22 to 36; the sequence is ATSASKNGGRTTPSA. Residues 22-43 are disordered; sequence ATSASKNGGRTTPSALTPRPRS. 72–79 lines the ATP pocket; the sequence is GPAGTGKT.

This sequence belongs to the CbbQ/NirQ/NorQ/GpvN family. Forms homodimers, probably interacts with other GV proteins including GvpA.

Its subcellular location is the gas vesicle. It is found in the cytoplasm. The enzyme catalyses ATP + H2O = ADP + phosphate + H(+). An ATPase that functions in gas vesicle formation. A minor component of the gas vesicle, also found in soluble extracts. Gas vesicles (GV) are hollow, gas filled proteinaceous nanostructures. During planktonic growth they allow positioning of the organism at a favorable depth for light or nutrient acquisition. This chain is Gas vesicle ATPase GvpN, found in Ancylobacter aquaticus.